The chain runs to 527 residues: Organic cation/carnitine transporter 2 (527 aa).

Over 1-27 (MAEPTQPLLTDSNSSSPRSLDDTIESY) the chain is Cytoplasmic. A helical transmembrane segment spans residues 28-48 (IGSFGWAQFLQAALVSFSGVF). Topologically, residues 49-119 (DAQQTFISVF…SFVKGLPESS (71 aa)) are extracellular. The chain crosses the membrane as a helical span at residues 120-140 (FFVGCLIGGLVLSTLADSSLG). Over 141–149 (RKNMLFLSC) the chain is Cytoplasmic. Residues 150 to 170 (LVMAISTMLTVFSPNIWVYAV) traverse the membrane as a helical segment. The Extracellular portion of the chain corresponds to 171-176 (LRFVNG). Residues 177 to 195 (FGRATIGTCALVLSTELVG) form a helical membrane-spanning segment. 190–197 (STELVGKK) serves as a coordination point for ATP. Residues 196–201 (KKWRGR) are Cytoplasmic-facing. A helical transmembrane segment spans residues 202–222 (VGIMSFFGFMLGFLSLPLMAY). The Extracellular segment spans residues 223 to 230 (MNRGSSWR). Residues 231–251 (ILYAWTSIPTIIYCVLVRFFV) traverse the membrane as a helical segment. Over 252-326 (CESPRWLFVR…LVEKRWALKR (75 aa)) the chain is Cytoplasmic. The chain crosses the membrane as a helical span at residues 327-347 (LSAVMAIAFGIGLVYYGMPLA). Topologically, residues 348 to 356 (LSNLDFNIY) are extracellular. A helical membrane pass occupies residues 357 to 377 (LSAAFNALMDLPANLITLFLV). Topologically, residues 378–385 (DKLSRRNA) are cytoplasmic. A helical membrane pass occupies residues 386–406 (LIGFTALGGVSSVLIFALHNM). At 407 to 415 (RIGNHGALQ) the chain is on the extracellular side. Residues 416 to 436 (LALELISYFSACSAFNMEMIY) traverse the membrane as a helical segment. At 437 to 448 (TIELFPTCVRNS) the chain is on the cytoplasmic side. The helical transmembrane segment at 449-469 (AIAMARQALVLGGVFSPIMVA) threads the bilayer. The Extracellular segment spans residues 470–475 (AGRKNA). The helical transmembrane segment at 476 to 496 (FWSFGLFGLAIGLLGLFAVGL) threads the bilayer. The Cytoplasmic portion of the chain corresponds to 497 to 527 (PETRGSDLCDTMDEEECKDRRSKVAVNNVIA).

The protein belongs to the major facilitator (TC 2.A.1) superfamily. Organic cation transporter (TC 2.A.1.19) family. As to expression, weakly expressed in roots, including tips and initiation site of lateral roots, siliques and flowers, especially in pollen and stigma.

The protein resides in the vacuole membrane. In terms of biological role, high affinity carnitine transporter involved in the active cellular uptake of carnitine. Also transports organic cations. This Arabidopsis thaliana (Mouse-ear cress) protein is Organic cation/carnitine transporter 2 (OCT2).